A 118-amino-acid polypeptide reads, in one-letter code: Acidic phospholipase A2 PA-3 (118 aa).

Intrachain disulfides connect cysteine 11-cysteine 71, cysteine 27-cysteine 117, cysteine 29-cysteine 45, cysteine 44-cysteine 98, cysteine 51-cysteine 91, cysteine 60-cysteine 84, and cysteine 78-cysteine 89. Positions 28, 30, and 32 each coordinate Ca(2+). Residue histidine 48 is part of the active site. Residue aspartate 49 participates in Ca(2+) binding. Aspartate 92 is a catalytic residue.

This sequence belongs to the phospholipase A2 family. Group I subfamily. D49 sub-subfamily. Ca(2+) is required as a cofactor. In terms of tissue distribution, expressed by the venom gland.

The protein resides in the secreted. The enzyme catalyses a 1,2-diacyl-sn-glycero-3-phosphocholine + H2O = a 1-acyl-sn-glycero-3-phosphocholine + a fatty acid + H(+). Its function is as follows. PLA2 catalyzes the calcium-dependent hydrolysis of the 2-acyl groups in 3-sn-phosphoglycerides. In Pseudechis australis (Mulga snake), this protein is Acidic phospholipase A2 PA-3.